The primary structure comprises 271 residues: Pyridoxine kinase (271 aa).

Asn-141 is a binding site for ATP. Residue Glu-144 coordinates Mg(2+). Residues 178–182 (TGGGK), Asp-190, Ile-206, Gly-215, and Lys-240 each bind ATP.

This sequence belongs to the ThiD family. Homodimer.

The enzyme catalyses pyridoxal + ATP = pyridoxal 5'-phosphate + ADP + H(+). Phosphorylates B6 vitamers; functions in a salvage pathway. Uses pyridoxal, pyridoxine, and pyridoxamine as substrates. Can also use hydroxymethylpyrimidine (HMP) as substrate. The protein is Pyridoxine kinase (pdxK) of Bacillus subtilis (strain 168).